The chain runs to 222 residues: RING finger protein 141 (222 aa).

The RING-type zinc-finger motif lies at 147–184 (CCICMDGKADLILPCAHSFCQKCIDKWSGQSRNCPVCR).

In Danio rerio (Zebrafish), this protein is RING finger protein 141 (rnf141).